The chain runs to 568 residues: AP2-like ethylene-responsive transcription factor PLT2 (568 aa).

A compositionally biased stretch (low complexity) spans A151–A171. The segment at A151–V173 is disordered. 2 consecutive DNA-binding regions (AP2/ERF) follow at residues I190–P256 and M292–E350. The interval W548 to E568 is disordered.

The protein belongs to the AP2/ERF transcription factor family. AP2 subfamily. Stabilized in root meristems by reactive oxygen species (ROS) mediated oxidative post-translational modification triggered by RGF1 hormone peptide in a RITF1-dependent manner. As to expression, expressed in roots, seedlings, flowers, and siliques. Also detected at low levels in leaves. In roots, specifically detected in the distal root meristem, including the QC. This tissue specificity is regulated by auxin gradient and depends on PIN proteins.

The protein localises to the nucleus. Probably acts as a transcriptional activator. Binds to the GCC-box pathogenesis-related promoter element. May be involved in the regulation of gene expression by stress factors and by components of stress signal transduction pathways. Master regulator of basal/root fate. Essential for root quiescent center (QC) and columella specification, stem cell activity, as well as for establishment of the stem cell niche during embryogenesis. Modulates the root polar auxin transport by regulating the distribution of PIN genes. Essential role in respecifying pattern and polarity in damaged roots. Direct target of the transcriptional corepressor TPL. Expression levels and patterns regulated post-transcriptionally by root meristem growth factors (RGFs). In Arabidopsis thaliana (Mouse-ear cress), this protein is AP2-like ethylene-responsive transcription factor PLT2.